The chain runs to 101 residues: UPF0235 protein SG2030 (101 aa).

It belongs to the UPF0235 family.

The protein is UPF0235 protein SG2030 of Sodalis glossinidius (strain morsitans).